A 247-amino-acid chain; its full sequence is tRNA (guanine-N(1)-)-methyltransferase (247 aa).

S-adenosyl-L-methionine is bound by residues Gly-117 and 136-141 (LGDFVL).

The protein belongs to the RNA methyltransferase TrmD family. In terms of assembly, homodimer.

Its subcellular location is the cytoplasm. It catalyses the reaction guanosine(37) in tRNA + S-adenosyl-L-methionine = N(1)-methylguanosine(37) in tRNA + S-adenosyl-L-homocysteine + H(+). In terms of biological role, specifically methylates guanosine-37 in various tRNAs. The polypeptide is tRNA (guanine-N(1)-)-methyltransferase (Myxococcus xanthus (strain DK1622)).